The sequence spans 88 residues: Cell division topological specificity factor (88 aa).

This sequence belongs to the MinE family.

Functionally, prevents the cell division inhibition by proteins MinC and MinD at internal division sites while permitting inhibition at polar sites. This ensures cell division at the proper site by restricting the formation of a division septum at the midpoint of the long axis of the cell. The chain is Cell division topological specificity factor from Shewanella denitrificans (strain OS217 / ATCC BAA-1090 / DSM 15013).